A 361-amino-acid polypeptide reads, in one-letter code: Peptide chain release factor 1 (361 aa).

Position 237 is an N5-methylglutamine (Gln237).

It belongs to the prokaryotic/mitochondrial release factor family. Post-translationally, methylated by PrmC. Methylation increases the termination efficiency of RF1.

Its subcellular location is the cytoplasm. Its function is as follows. Peptide chain release factor 1 directs the termination of translation in response to the peptide chain termination codons UAG and UAA. The polypeptide is Peptide chain release factor 1 (Thioalkalivibrio sulfidiphilus (strain HL-EbGR7)).